The chain runs to 302 residues: Glycine--tRNA ligase alpha subunit (302 aa).

It belongs to the class-II aminoacyl-tRNA synthetase family. As to quaternary structure, tetramer of two alpha and two beta subunits.

The protein localises to the cytoplasm. The catalysed reaction is tRNA(Gly) + glycine + ATP = glycyl-tRNA(Gly) + AMP + diphosphate. The protein is Glycine--tRNA ligase alpha subunit of Xanthomonas euvesicatoria pv. vesicatoria (strain 85-10) (Xanthomonas campestris pv. vesicatoria).